Reading from the N-terminus, the 276-residue chain is Diaminopimelate epimerase (276 aa).

Substrate-binding residues include asparagine 13, glutamine 46, and asparagine 66. The active-site Proton donor is cysteine 75. Substrate-binding positions include 76-77 (GN), asparagine 159, asparagine 192, and 210-211 (ER). Residue cysteine 219 is the Proton acceptor of the active site. Residue 220 to 221 (GT) participates in substrate binding.

It belongs to the diaminopimelate epimerase family. As to quaternary structure, homodimer.

The protein localises to the cytoplasm. It catalyses the reaction (2S,6S)-2,6-diaminopimelate = meso-2,6-diaminopimelate. It functions in the pathway amino-acid biosynthesis; L-lysine biosynthesis via DAP pathway; DL-2,6-diaminopimelate from LL-2,6-diaminopimelate: step 1/1. Its function is as follows. Catalyzes the stereoinversion of LL-2,6-diaminopimelate (L,L-DAP) to meso-diaminopimelate (meso-DAP), a precursor of L-lysine and an essential component of the bacterial peptidoglycan. The protein is Diaminopimelate epimerase of Pseudomonas fluorescens (strain Pf0-1).